The sequence spans 190 residues: Zinc metalloproteinase/disintegrin (190 aa).

A Peptidase M12B domain is found at 1 to 11 (NHNPECIVNEP). The Disintegrin domain occupies 19–105 (PPVCGNELLE…ECPADVFHKN (87 aa)). Residues Val-21, Asn-24, Leu-26, Glu-28, Glu-31, and Asp-34 each contribute to the Ca(2+) site. Disulfide bonds link Cys-33–Cys-51, Cys-35–Cys-46, Cys-45–Cys-68, Cys-59–Cys-65, Cys-64–Cys-90, and Cys-77–Cys-97. Positions 83 to 85 (ECD) match the D/ECD-tripeptide motif. Asp-85, Pro-86, Glu-88, Asp-100, and Val-101 together coordinate Ca(2+). Residues 104-190 (KNGQPCLDNY…DNSPGQNGPC (87 aa)) constitute a propeptide that is removed on maturation.

Belongs to the venom metalloproteinase (M12B) family. P-III subfamily. Monomer. Requires Zn(2+) as cofactor. Expressed by the venom gland.

It localises to the secreted. Impairs hemostasis in the envenomed animal. Functionally, inhibits platelet aggregation induced by ADP, thrombin, platelet-activating factor and collagen. Acts by inhibiting fibrinogen interaction with platelet receptors GPIIb/GPIIIa (ITGA2B/ITGB3). The chain is Zinc metalloproteinase/disintegrin from Gloydius brevicauda (Korean slamosa snake).